A 570-amino-acid polypeptide reads, in one-letter code: Nucleoprotein (570 aa).

The interval 54 to 236 (LRKTKRTDDD…ITKEESSINI (183 aa)) is binding site for the cap structure m7GTP. Residues 332–356 (DLTKKPDAVPEPGAAPRPAERKGQN) are disordered. The Mg(2+) site is built by D386 and E388. Mn(2+) is bound by residues D386 and E388. Zn(2+) contacts are provided by E396, C503, H506, and C531. Mg(2+) is bound at residue D535. A Mn(2+)-binding site is contributed by D535.

It belongs to the arenaviridae nucleocapsid protein family. As to quaternary structure, homomultimerizes to form the nucleocapsid. Binds to viral genomic RNA. Interacts with glycoprotein G2. Interacts with protein Z; this interaction probably directs the encapsidated genome to budding sites. Interacts with protein L; this interaction does not interfere with Z-L interaction. Interacts with host IKBKE (via Protein kinase domain); the interaction inhibits IKBKE kinase activity.

It is found in the virion. The protein localises to the host cytoplasm. Its function is as follows. Encapsidates the genome, protecting it from nucleases. The encapsidated genomic RNA is termed the nucleocapsid (NC). Serves as template for viral transcription and replication. The increased presence of protein N in host cell does not seem to trigger the switch from transcription to replication as observed in other negative strain RNA viruses. Through the interaction with host IKBKE, strongly inhibits the phosphorylation and nuclear translocation of host IRF3, a protein involved in interferon activation pathway, leading to the inhibition of interferon-beta and IRF3-dependent promoters activation. Also encodes a functional 3'-5' exoribonuclease that degrades preferentially dsRNA substrates and thereby participates in the suppression of interferon induction. This Artibeus (neotropical fruit bats) protein is Nucleoprotein.